The sequence spans 125 residues: Cytochrome c oxidase assembly factor 6 homolog (125 aa).

Residue Gly-2 is modified to N-acetylalanine. The 44-residue stretch at 55 to 98 (RQVCWGARDEYWKCLDENLEDASQCKKLRSSFESSCPQQWIKYF) folds into the CHCH domain. The Cx9C motif signature appears at 58–68 (CWGARDEYWKC). 2 disulfides stabilise this stretch: Cys-58–Cys-90 and Cys-68–Cys-79. Positions 79-90 (CKKLRSSFESSC) match the Cx10C motif motif.

It belongs to the cytochrome c oxidase subunit 6B family. Interacts with COA1. Found in a complex with TMEM177, COX20, MT-CO2/COX2, COX18, SCO1 and SCO2. Interacts with MT-CO2/COX2 and SCO2. Interacts with SCO1. Interacts with COX20 in a MT-CO2/COX2- and COX18-dependent manner. Interacts with COX16.

It is found in the mitochondrion intermembrane space. In terms of biological role, involved in the maturation of the mitochondrial respiratory chain complex IV subunit MT-CO2/COX2. Thereby, may regulate early steps of complex IV assembly. Mitochondrial respiratory chain complex IV or cytochrome c oxidase is the component of the respiratory chain that catalyzes the transfer of electrons from intermembrane space cytochrome c to molecular oxygen in the matrix and as a consequence contributes to the proton gradient involved in mitochondrial ATP synthesis. May also be required for efficient formation of respiratory supercomplexes comprised of complexes III and IV. The polypeptide is Cytochrome c oxidase assembly factor 6 homolog (COA6) (Homo sapiens (Human)).